The primary structure comprises 331 residues: Oxygen-evolving enhancer protein 1-2, chloroplastic (331 aa).

The N-terminal 57 residues, 1–57 (MATSLQAAATFLQPAKIAASPSRNVHLRSNQTVGKSFGLDSSQARLTCSLHSDLKDF), are a transit peptide targeting the chloroplast. A thylakoid-targeting transit peptide spans 58-84 (AGKCSDAAKIAGFALATSALVVSGAGA).

The protein belongs to the PsbO family.

It is found in the plastid. The protein resides in the chloroplast thylakoid membrane. Functionally, stabilizes the manganese cluster which is the primary site of water splitting. Regulates dephosphorylation and turnover of the PSII reaction center D1 protein. The sequence is that of Oxygen-evolving enhancer protein 1-2, chloroplastic (PSBO2) from Arabidopsis thaliana (Mouse-ear cress).